The following is a 524-amino-acid chain: Solute carrier family 40 member 1 (524 aa).

A compositionally biased stretch (basic and acidic residues) spans 1–18; sequence MENETELRVVHQEEQQRE. The tract at residues 1-30 is disordered; that stretch reads MENETELRVVHQEEQQREEGEDESQPQNPP. Helical transmembrane passes span 70–92, 109–129, 137–157, 191–211, 218–238, 314–334, 347–367, 380–400, 409–429, 446–466, and 472–492; these read SLLLAAIYGAIESGSTAIFGPIV, LLFQNLSYTIAGGAVIKLLLV, LPVFAILIVLTNLAGAIGVLS, GIDLSSKLLSPVITGLIISFV, ITFAAWATITAWVEYWLFISV, VVLPGVSLALLFFTVLSFGTL, YIIGIGRGISATVGLAATLVY, GLWSFWSQWSCLLVCVGSIWV, MLMAGVAASRLGLWMFDLAVI, GVQNSLQSALDLMAYLLGIIV, and FWILTLISFSTVSLAGMLYTI.

It belongs to the ferroportin (FP) (TC 2.A.100) family. SLC40A subfamily.

It is found in the membrane. Its function is as follows. May be involved in iron transport and iron homeostasis. In Arabidopsis thaliana (Mouse-ear cress), this protein is Solute carrier family 40 member 1 (IREG1).